The chain runs to 147 residues: D-aminoacyl-tRNA deacylase (147 aa).

The Gly-cisPro motif, important for rejection of L-amino acids signature appears at 136–137 (GP).

Belongs to the DTD family. Homodimer.

It is found in the cytoplasm. It catalyses the reaction glycyl-tRNA(Ala) + H2O = tRNA(Ala) + glycine + H(+). The enzyme catalyses a D-aminoacyl-tRNA + H2O = a tRNA + a D-alpha-amino acid + H(+). Functionally, an aminoacyl-tRNA editing enzyme that deacylates mischarged D-aminoacyl-tRNAs. Also deacylates mischarged glycyl-tRNA(Ala), protecting cells against glycine mischarging by AlaRS. Acts via tRNA-based rather than protein-based catalysis; rejects L-amino acids rather than detecting D-amino acids in the active site. By recycling D-aminoacyl-tRNA to D-amino acids and free tRNA molecules, this enzyme counteracts the toxicity associated with the formation of D-aminoacyl-tRNA entities in vivo and helps enforce protein L-homochirality. This is D-aminoacyl-tRNA deacylase from Streptococcus sanguinis (strain SK36).